Consider the following 149-residue polypeptide: UPF0179 protein MM_0589 (149 aa).

This sequence belongs to the UPF0179 family.

The protein is UPF0179 protein MM_0589 of Methanosarcina mazei (strain ATCC BAA-159 / DSM 3647 / Goe1 / Go1 / JCM 11833 / OCM 88) (Methanosarcina frisia).